The following is a 382-amino-acid chain: Pyrimidine monooxygenase RutA (382 aa).

FMN contacts are provided by residues 68–69 (IK), asparagine 134, glutamate 143, 159–160 (RY), and serine 209.

This sequence belongs to the NtaA/SnaA/DszA monooxygenase family. RutA subfamily.

It carries out the reaction uracil + FMNH2 + NADH + O2 = (Z)-3-ureidoacrylate + FMN + NAD(+) + H2O + H(+). The catalysed reaction is thymine + FMNH2 + NADH + O2 = (Z)-2-methylureidoacrylate + FMN + NAD(+) + H2O + H(+). Functionally, catalyzes the pyrimidine ring opening between N-3 and C-4 by an unusual flavin hydroperoxide-catalyzed mechanism, adding oxygen atoms in the process to yield ureidoacrylate peracid, that immediately reacts with FMN forming ureidoacrylate and FMN-N(5)-oxide. The FMN-N(5)-oxide reacts spontaneously with NADH to produce FMN. Requires the flavin reductase RutF to regenerate FMN in vivo. The polypeptide is Pyrimidine monooxygenase RutA (Escherichia coli (strain B / BL21-DE3)).